Here is a 299-residue protein sequence, read N- to C-terminus: Homoserine kinase (299 aa).

Position 85 to 95 (85 to 95) interacts with ATP; it reads PMSRGLGSSAT.

Belongs to the GHMP kinase family. Homoserine kinase subfamily.

It is found in the cytoplasm. The enzyme catalyses L-homoserine + ATP = O-phospho-L-homoserine + ADP + H(+). It participates in amino-acid biosynthesis; L-threonine biosynthesis; L-threonine from L-aspartate: step 4/5. Functionally, catalyzes the ATP-dependent phosphorylation of L-homoserine to L-homoserine phosphate. This Clostridium novyi (strain NT) protein is Homoserine kinase.